The following is a 515-amino-acid chain: Lysine--tRNA ligase (515 aa).

Residues Glu-425 and Glu-432 each coordinate Mg(2+).

Belongs to the class-II aminoacyl-tRNA synthetase family. Homodimer. It depends on Mg(2+) as a cofactor.

The protein resides in the cytoplasm. The enzyme catalyses tRNA(Lys) + L-lysine + ATP = L-lysyl-tRNA(Lys) + AMP + diphosphate. This Cupriavidus metallidurans (strain ATCC 43123 / DSM 2839 / NBRC 102507 / CH34) (Ralstonia metallidurans) protein is Lysine--tRNA ligase.